The sequence spans 385 residues: ATP phosphoribosyltransferase regulatory subunit (385 aa).

This sequence belongs to the class-II aminoacyl-tRNA synthetase family. HisZ subfamily. Heteromultimer composed of HisG and HisZ subunits.

Its subcellular location is the cytoplasm. It functions in the pathway amino-acid biosynthesis; L-histidine biosynthesis; L-histidine from 5-phospho-alpha-D-ribose 1-diphosphate: step 1/9. Its function is as follows. Required for the first step of histidine biosynthesis. May allow the feedback regulation of ATP phosphoribosyltransferase activity by histidine. The polypeptide is ATP phosphoribosyltransferase regulatory subunit (Bordetella parapertussis (strain 12822 / ATCC BAA-587 / NCTC 13253)).